A 202-amino-acid polypeptide reads, in one-letter code: Transmembrane 4 L6 family member 1 (202 aa).

Topologically, residues 1 to 9 (MCYVKCARY) are cytoplasmic. The helical transmembrane segment at 10-30 (IGYSLVWAAVFCIVANALLYF) threads the bilayer. Residues 31-49 (PNGETKYATEDHLSRFVWY) are Extracellular-facing. A helical transmembrane segment spans residues 50–70 (FAGIVGGGLLMLLPAFVFIGM). Topologically, residues 71–93 (DEEDCCGCCGYENYGKRCSMLSS) are cytoplasmic. Residues 94–114 (VLAALIGIVGSAYCVIVASLG) traverse the membrane as a helical segment. The Extracellular segment spans residues 115 to 161 (LAEGPKCSDAHGVWNYTFASTEGQYLLNSSMWSKCYEPKHIVEWHVT). 2 N-linked (GlcNAc...) asparagine glycosylation sites follow: Asn-129 and Asn-142. The chain crosses the membrane as a helical span at residues 162–182 (LFSILLAFAAVEFILCLIQVI). Topologically, residues 183 to 202 (NGMLGGLCGYCCSRQQQYNC) are cytoplasmic.

The protein belongs to the L6 tetraspanin family. In terms of assembly, present in high molecular weight complexes in tumor cells. Interacts with SDCBP2. Highly expressed in skin and lung. Moderately expressed in lymph nodes and kidneys. Also present in thymic stroma and fibroblasts.

Its subcellular location is the membrane. The sequence is that of Transmembrane 4 L6 family member 1 (Tm4sf1) from Mus musculus (Mouse).